Reading from the N-terminus, the 150-residue chain is Transcription antitermination protein NusB (150 aa).

The protein belongs to the NusB family.

Involved in transcription antitermination. Required for transcription of ribosomal RNA (rRNA) genes. Binds specifically to the boxA antiterminator sequence of the ribosomal RNA (rrn) operons. The chain is Transcription antitermination protein NusB from Alcanivorax borkumensis (strain ATCC 700651 / DSM 11573 / NCIMB 13689 / SK2).